Consider the following 432-residue polypeptide: Delta-aminolevulinic acid dehydratase, chloroplastic (432 aa).

The tract at residues 84–113 (AAPPVPAKPSAPEGTPAISPLVMPARPRRN) is disordered. The Schiff-base intermediate with substrate role is filled by lysine 300. 5-aminolevulinate contacts are provided by arginine 310 and lysine 322. Position 338 (glutamate 338) interacts with Mg(2+). Catalysis depends on lysine 353, which acts as the Schiff-base intermediate with substrate. Residues serine 379 and tyrosine 418 each coordinate 5-aminolevulinate.

The protein belongs to the ALAD family. As to quaternary structure, homooctamer. The cofactor is Mg(2+).

The protein resides in the plastid. The protein localises to the chloroplast. The catalysed reaction is 2 5-aminolevulinate = porphobilinogen + 2 H2O + H(+). Its pathway is porphyrin-containing compound metabolism; protoporphyrin-IX biosynthesis; coproporphyrinogen-III from 5-aminolevulinate: step 1/4. Functionally, catalyzes an early step in the biosynthesis of tetrapyrroles. Binds two molecules of 5-aminolevulinate per subunit, each at a distinct site, and catalyzes their condensation to form porphobilinogen. The protein is Delta-aminolevulinic acid dehydratase, chloroplastic (HEMB) of Physcomitrium patens (Spreading-leaved earth moss).